We begin with the raw amino-acid sequence, 201 residues long: Glycolipid transfer protein (201 aa).

The glycolipid transfer protein homology domain stretch occupies residues 28-168 (IATTQFLEAC…KDFYAKLGDD (141 aa)).

Its function is as follows. Cargo transport protein that plays a key role in transport and secretion of liamocins, glycolipids (also called heavy oils) composed of a single mannitol or arabitol headgroup linked to either three, four or even six 3,5-dihydroxydecanoic ester tail-groups. The sequence is that of Glycolipid transfer protein from Aureobasidium melanogenum (Aureobasidium pullulans var. melanogenum).